A 108-amino-acid chain; its full sequence is Class I hydrophobin eas (108 aa).

Residues 1-26 (MQFTSVFTILAIAMTAAAAPAEVVPR) form the signal peptide. 4 disulfide bridges follow: Cys-35/Cys-86, Cys-44/Cys-80, Cys-45/Cys-71, and Cys-87/Cys-106.

The protein belongs to the fungal hydrophobin family. In terms of assembly, self-assembles to form functional amyloid fibrils called rodlets. Self-assembly into fibrillar rodlets occurs spontaneously at hydrophobic:hydrophilic interfaces and the rodlets further associate laterally to form amphipathic monolayers.

It is found in the secreted. Its subcellular location is the spore wall. In terms of biological role, aerial growth, conidiation, and dispersal of filamentous fungi in the environment rely upon a capability of their secreting small amphipathic proteins called hydrophobins (HPBs) with low sequence identity. Class I can self-assemble into an outermost layer of rodlet bundles on aerial cell surfaces, conferring cellular hydrophobicity that supports fungal growth, development and dispersal; whereas class II form highly ordered films at water-air interfaces through intermolecular interactions but contribute nothing to the rodlet structure. Eas is a class I hydrophobin that forms functional amyloid fibrils called rodlets that facilitate spore formation and dispersal. This Neurospora crassa (strain ATCC 24698 / 74-OR23-1A / CBS 708.71 / DSM 1257 / FGSC 987) protein is Class I hydrophobin eas.